The following is an 805-amino-acid chain: Angiotensin-converting enzyme 2 (805 aa).

The signal sequence occupies residues 1-17 (MSGSSWLLLSLVAVTAA). Over 18–740 (QSTIEEQAKT…LGPPNQPPVS (723 aa)) the chain is Extracellular. The Peptidase M2 domain occupies 19–607 (STIEEQAKTF…QNKNSFVGWS (589 aa)). 3 N-linked (GlcNAc...) asparagine glycosylation sites follow: Asn-53, Asn-90, and Asn-103. Cysteines 133 and 141 form a disulfide. Arg-169 is a chloride binding site. Arg-273 is a binding site for substrate. Asn-322 carries an N-linked (GlcNAc...) asparagine glycan. Cys-344 and Cys-361 are joined by a disulfide. 345–346 (HP) is a binding site for substrate. His-374 provides a ligand contact to Zn(2+). Glu-375 serves as the catalytic Proton acceptor. The Zn(2+) site is built by His-378 and Glu-402. N-linked (GlcNAc...) asparagine glycosylation is present at Asn-432. Residues Trp-477 and Lys-481 each contribute to the chloride site. Residue His-505 is the Proton donor of the active site. Tyr-515 contacts substrate. The cysteines at positions 530 and 542 are disulfide-linked. N-linked (GlcNAc...) asparagine glycosylation is present at Asn-546. The Collectrin-like domain maps to 614-805 (ADQSIKVRIS…QNTDDVQTSF (192 aa)). The interval 652-659 (RKYFLEVK) is essential for cleavage by ADAM17. Asn-690 carries an N-linked (GlcNAc...) asparagine glycan. An essential for cleavage by TMPRSS11D and TMPRSS2 region spans residues 697–716 (RTEVEKAIRMSRSRINDAFR). The chain crosses the membrane as a helical span at residues 741-761 (IWLIVFGVVMGVIVVGIVVLI). The Cytoplasmic portion of the chain corresponds to 762-805 (FTGIRDRKKKNKARNEENPYASIDISKGENNPGFQNTDDVQTSF). Residues 772 to 805 (NKARNEENPYASIDISKGENNPGFQNTDDVQTSF) are disordered. The LIR motif lies at 778-786 (ENPYASIDI). Tyr-781 bears the Phosphotyrosine mark. An Endocytic sorting signal motif is present at residues 781-784 (YASI). Positions 781–785 (YASID) match the SH2-binding motif. At Ser-783 the chain carries Phosphoserine. A Glycyl lysine isopeptide (Lys-Gly) (interchain with G-Cter in ubiquitin) cross-link involves residue Lys-788. Positions 789–805 (GENNPGFQNTDDVQTSF) are enriched in polar residues. Positions 792-795 (NPGF) match the PTB motif. The PDZ-binding motif lies at 803–805 (TSF).

Belongs to the peptidase M2 family. In terms of assembly, homodimer. Interacts with the catalytically active form of TMPRSS2. Interacts with SLC6A19; this interaction is essential for expression and function of SLC6A19 in intestine. Interacts with ITGA5:ITGB1. Probably interacts (via endocytic sorting signal motif) with AP2M1; the interaction is inhibited by phosphorylation of Tyr-781. Interacts (via PDZ-binding motif) with NHERF1 (via PDZ domains); the interaction may enhance ACE2 membrane residence. It depends on Zn(2+) as a cofactor. Chloride is required as a cofactor. In terms of processing, proteolytic cleavage by ADAM17 generates a secreted form. Also cleaved by serine proteases: TMPRSS2, TMPRSS11D and HPN/TMPRSS1. Phosphorylated. Phosphorylation at Tyr-781 probably inhibits interaction with AP2M1 and enables interactions with proteins containing SH2 domains. Post-translationally, ubiquitinated. Ubiquitinated on Lys-788 via 'Lys-48'-linked ubiquitin. 'Lys-48'-linked deubiquitinated by USP50 on the Lys-788; leading to its stabilization.

It localises to the secreted. Its subcellular location is the cell membrane. It is found in the cytoplasm. The protein localises to the cell projection. The protein resides in the cilium. It localises to the apical cell membrane. It carries out the reaction angiotensin II + H2O = angiotensin-(1-7) + L-phenylalanine. The enzyme catalyses angiotensin I + H2O = angiotensin-(1-9) + L-leucine. The catalysed reaction is bradykinin(1-8) + H2O = bradykinin(1-7) + L-phenylalanine. It catalyses the reaction neurotensin + H2O = neurotensin-(1-12) + L-leucine. It carries out the reaction kinetensin + H2O = kinetensin-(1-8) + L-leucine. The enzyme catalyses dynorphin A-(1-13) + H2O = dynorphin A-(1-12) + L-lysine. The catalysed reaction is apelin-13 + H2O = apelin-12 + L-phenylalanine. It catalyses the reaction [Pyr1]apelin-13 + H2O = [Pyr1]apelin-12 + L-phenylalanine. It carries out the reaction apelin-17 + H2O = apelin-16 + L-phenylalanine. Its function is as follows. Essential counter-regulatory carboxypeptidase of the renin-angiotensin hormone system that is a critical regulator of blood volume, systemic vascular resistance, and thus cardiovascular homeostasis. Converts angiotensin I to angiotensin 1-9, a nine-amino acid peptide with anti-hypertrophic effects in cardiomyocytes, and angiotensin II to angiotensin 1-7, which then acts as a beneficial vasodilator and anti-proliferation agent, counterbalancing the actions of the vasoconstrictor angiotensin II. Also removes the C-terminal residue from three other vasoactive peptides, neurotensin, kinetensin, and des-Arg bradykinin, but is not active on bradykinin. Also cleaves other biological peptides, such as apelins, casomorphins and dynorphin A. Plays an important role in amino acid transport by acting as binding partner of amino acid transporter SLC6A19 in intestine, regulating trafficking, expression on the cell surface, and its catalytic activity. The chain is Angiotensin-converting enzyme 2 (ACE2) from Pongo abelii (Sumatran orangutan).